The sequence spans 154 residues: Superoxide dismutase [Cu-Zn] (154 aa).

Residues His47, His49, and His64 each contribute to the Cu cation site. Cys58 and Cys147 are disulfide-bonded. The Zn(2+) site is built by His64, His72, His81, and Asp84. Residue His121 coordinates Cu cation. Arg144 provides a ligand contact to substrate.

This sequence belongs to the Cu-Zn superoxide dismutase family. In terms of assembly, homodimer. The cofactor is Cu cation. Requires Zn(2+) as cofactor.

The protein localises to the cytoplasm. It catalyses the reaction 2 superoxide + 2 H(+) = H2O2 + O2. Functionally, destroys radicals which are normally produced within the cells and which are toxic to biological systems. The sequence is that of Superoxide dismutase [Cu-Zn] (SOD1) from Podospora anserina (Pleurage anserina).